A 653-amino-acid polypeptide reads, in one-letter code: tRNA-guanine(15) transglycosylase (653 aa).

Catalysis depends on aspartate 91, which acts as the Nucleophile. Residues aspartate 126 and alanine 193 each contribute to the substrate site. The Zn(2+) site is built by cysteine 276, cysteine 278, and cysteine 281. The region spanning 578–653 (AWRVAVNEES…QAVKTRKGGF (76 aa)) is the PUA domain.

Belongs to the archaeosine tRNA-ribosyltransferase family. It depends on Zn(2+) as a cofactor.

The enzyme catalyses guanosine(15) in tRNA + 7-cyano-7-deazaguanine = 7-cyano-7-carbaguanosine(15) in tRNA + guanine. The protein operates within tRNA modification; archaeosine-tRNA biosynthesis. Functionally, exchanges the guanine residue with 7-cyano-7-deazaguanine (preQ0) at position 15 in the dihydrouridine loop (D-loop) of archaeal tRNAs. In Methanothermobacter thermautotrophicus (strain ATCC 29096 / DSM 1053 / JCM 10044 / NBRC 100330 / Delta H) (Methanobacterium thermoautotrophicum), this protein is tRNA-guanine(15) transglycosylase.